The following is a 425-amino-acid chain: UPF0597 protein KPN78578_43500 (425 aa).

It belongs to the UPF0597 family.

This Klebsiella pneumoniae subsp. pneumoniae (strain ATCC 700721 / MGH 78578) protein is UPF0597 protein KPN78578_43500.